The primary structure comprises 66 residues: Early E3 7.7 kDa protein (66 aa).

Residues asparagine 7 and asparagine 24 are each glycosylated (N-linked (GlcNAc...) asparagine; by host). The helical transmembrane segment at 44 to 64 (ITILIVIGILILSVILYFLFS) threads the bilayer.

It is found in the host nucleus membrane. This chain is Early E3 7.7 kDa protein, found in Human adenovirus B serotype 7 (HAdV-7).